Consider the following 323-residue polypeptide: Thymidylate synthase (323 aa).

Residues arginine 21 and 172–173 (RR) contribute to the dUMP site. Cysteine 192 (nucleophile) is an active-site residue. DUMP-binding positions include 214-217 (RSND), asparagine 225, and 255-257 (HVY). Aspartate 217 lines the (6R)-5,10-methylene-5,6,7,8-tetrahydrofolate pocket. A (6R)-5,10-methylene-5,6,7,8-tetrahydrofolate-binding site is contributed by alanine 322.

It belongs to the thymidylate synthase family. Bacterial-type ThyA subfamily. In terms of assembly, homodimer.

It is found in the cytoplasm. It carries out the reaction dUMP + (6R)-5,10-methylene-5,6,7,8-tetrahydrofolate = 7,8-dihydrofolate + dTMP. It participates in pyrimidine metabolism; dTTP biosynthesis. In terms of biological role, catalyzes the reductive methylation of 2'-deoxyuridine-5'-monophosphate (dUMP) to 2'-deoxythymidine-5'-monophosphate (dTMP) while utilizing 5,10-methylenetetrahydrofolate (mTHF) as the methyl donor and reductant in the reaction, yielding dihydrofolate (DHF) as a by-product. This enzymatic reaction provides an intracellular de novo source of dTMP, an essential precursor for DNA biosynthesis. The chain is Thymidylate synthase from Pseudomonas putida (strain ATCC 47054 / DSM 6125 / CFBP 8728 / NCIMB 11950 / KT2440).